We begin with the raw amino-acid sequence, 344 residues long: MTRLTLAIDAMGGDFGPCVTVPASLQALESNPHLHLLLVGDPDIITSSLATADSALRARLQIIAAESVIASDARPSQAIRASRGTSMRIALEQVKEGHAQACISAGNTGALMGLAKLLLKPLDGIDRPALMTVLPHQQHGKTVVLDLGANVDSDSAMLVQFAVMGAVVAEEVLAISRPRVALINIGQEDSKGLTSIRDAAAILRAAAEINFIGYLEGNDLLTGKTDVLVCDGFVGNVTLKTMEGVVRMFLSLLKSQGEGKKKAWWLRLLGRILQKRLAKKFGHLNPDQYNGACLLGLRGTVIKSHGAANQRAFTVAIQQAEQAVQRQIPQRIAARLEAVLPKSD.

Belongs to the PlsX family. In terms of assembly, homodimer. Probably interacts with PlsY.

The protein localises to the cytoplasm. The enzyme catalyses a fatty acyl-[ACP] + phosphate = an acyl phosphate + holo-[ACP]. The protein operates within lipid metabolism; phospholipid metabolism. Catalyzes the reversible formation of acyl-phosphate (acyl-PO(4)) from acyl-[acyl-carrier-protein] (acyl-ACP). This enzyme utilizes acyl-ACP as fatty acyl donor, but not acyl-CoA. This Erwinia tasmaniensis (strain DSM 17950 / CFBP 7177 / CIP 109463 / NCPPB 4357 / Et1/99) protein is Phosphate acyltransferase.